The sequence spans 222 residues: Ribosomal RNA small subunit methyltransferase I (222 aa).

Belongs to the methyltransferase superfamily. RsmI family.

The protein resides in the cytoplasm. It carries out the reaction cytidine(1402) in 16S rRNA + S-adenosyl-L-methionine = 2'-O-methylcytidine(1402) in 16S rRNA + S-adenosyl-L-homocysteine + H(+). Functionally, catalyzes the 2'-O-methylation of the ribose of cytidine 1402 (C1402) in 16S rRNA. The sequence is that of Ribosomal RNA small subunit methyltransferase I from Thermotoga maritima (strain ATCC 43589 / DSM 3109 / JCM 10099 / NBRC 100826 / MSB8).